A 699-amino-acid chain; its full sequence is Elongation factor G (699 aa).

The region spanning 8 to 286 (EKLRNIGIVA…AVIVTYPLPI (279 aa)) is the tr-type G domain. Residues 17-24 (AHIDAGKT), 84-88 (DTPGH), and 138-141 (NKMD) each bind GTP.

The protein belongs to the TRAFAC class translation factor GTPase superfamily. Classic translation factor GTPase family. EF-G/EF-2 subfamily.

The protein localises to the cytoplasm. Functionally, catalyzes the GTP-dependent ribosomal translocation step during translation elongation. During this step, the ribosome changes from the pre-translocational (PRE) to the post-translocational (POST) state as the newly formed A-site-bound peptidyl-tRNA and P-site-bound deacylated tRNA move to the P and E sites, respectively. Catalyzes the coordinated movement of the two tRNA molecules, the mRNA and conformational changes in the ribosome. In Aquifex pyrophilus, this protein is Elongation factor G (fusA).